Here is a 476-residue protein sequence, read N- to C-terminus: Nuclear envelope morphology protein 1 (476 aa).

A disordered region spans residues 47 to 74 (RRRSSYSASSLSSLSSKPTEKEVPTRNE). The span at 51 to 62 (SYSASSLSSLSS) shows a compositional bias: low complexity. A compositionally biased stretch (basic and acidic residues) spans 64–74 (PTEKEVPTRNE). The helical transmembrane segment at 123-139 (FFWGLCRFVFFPVLLSY) threads the bilayer. 2 disordered regions span residues 164–190 (SSHQDPAYSSFKRHRSSNSYSSSSNGN) and 232–256 (GKANSNRSGHSHQPQSTQFSPPAND). Polar residues predominate over residues 234 to 256 (ANSNRSGHSHQPQSTQFSPPAND). Asn237, Asn257, Asn284, and Asn356 each carry an N-linked (GlcNAc...) asparagine glycan. Residues 299–460 (SKLPRKTLVL…LNLLSFLHAL (162 aa)) enclose the FCP1 homology domain.

The protein belongs to the Dullard family. Component of the nem1-spo7 complex.

The protein resides in the endoplasmic reticulum membrane. Its subcellular location is the nucleus membrane. The catalysed reaction is O-phospho-L-seryl-[protein] + H2O = L-seryl-[protein] + phosphate. It catalyses the reaction O-phospho-L-threonyl-[protein] + H2O = L-threonyl-[protein] + phosphate. Its function is as follows. Catalytic component of the nem1-spo7 complex which acts as a phosphatase and may be required for proper nuclear membrane morphology. The protein is Nuclear envelope morphology protein 1 (nem1) of Schizosaccharomyces pombe (strain 972 / ATCC 24843) (Fission yeast).